The chain runs to 309 residues: Taste receptor type 2 member 8 (309 aa).

At 1–7 (MFSPADN) the chain is on the extracellular side. Residues 8 to 28 (IFIILITGEFILGILGNGYIA) traverse the membrane as a helical segment. Residues 29-50 (LVNWIDWIKKKKISTVDYILTN) are Cytoplasmic-facing. Residues 51-71 (LVIARICLISVMVVNGIVIVL) traverse the membrane as a helical segment. Topologically, residues 72–82 (NPDVYTKNKQQ) are extracellular. A helical membrane pass occupies residues 83-103 (IVIFTFWTFANYLNMWITTCL). The Cytoplasmic segment spans residues 104 to 131 (NVFYFLKIASSSHPLFLWLKWKIDMVVH). The helical transmembrane segment at 132-152 (WILLGCFAISLLVSLIAAIVL) threads the bilayer. At 153–184 (SCDYRFHAIAKHKRNITEMFXVSKIPYFEPLT) the chain is on the extracellular side. N-linked (GlcNAc...) asparagine glycosylation occurs at asparagine 167. A helical transmembrane segment spans residues 185-205 (LFNLFAIVPFIVSLISFFLLV). Residues 206-239 (RSLWRHTKQIKLYATGSRDPSTEVHVRAIKTMTS) are Cytoplasmic-facing. Residues 240–260 (FIFFFFLYFISSILMTFSYLM) traverse the membrane as a helical segment. Residues 261–266 (TKYKLA) lie on the Extracellular side of the membrane. A helical transmembrane segment spans residues 267 to 287 (VEFGEIAAILYPLGHSLILIV). Over 288-309 (LNNKLRQIFVRMLTCRKIACVI) the chain is Cytoplasmic.

Belongs to the G-protein coupled receptor T2R family.

It is found in the membrane. Receptor that may play a role in the perception of bitterness and is gustducin-linked. May play a role in sensing the chemical composition of the gastrointestinal content. The activity of this receptor may stimulate alpha gustducin, mediate PLC-beta-2 activation and lead to the gating of TRPM5. The sequence is that of Taste receptor type 2 member 8 (TAS2R8) from Pan troglodytes (Chimpanzee).